The chain runs to 130 residues: Small ribosomal subunit protein uS11 (130 aa).

This sequence belongs to the universal ribosomal protein uS11 family. Part of the 30S ribosomal subunit. Interacts with proteins S7 and S18. Binds to IF-3.

In terms of biological role, located on the platform of the 30S subunit, it bridges several disparate RNA helices of the 16S rRNA. Forms part of the Shine-Dalgarno cleft in the 70S ribosome. This Gluconobacter oxydans (strain 621H) (Gluconobacter suboxydans) protein is Small ribosomal subunit protein uS11.